The following is a 201-amino-acid chain: Phosphoheptose isomerase (201 aa).

Residues 36-195 form the SIS domain; the sequence is IAKSLNEGGK…EDILFEIPAA (160 aa). A substrate-binding site is contributed by 51 to 53; the sequence is NGG. Zn(2+)-binding residues include His-60 and Glu-64. Substrate is bound by residues Glu-64, 93–94, 119–121, Ser-124, and Gln-171; these read ND and STS. Positions 171 and 179 each coordinate Zn(2+).

It belongs to the SIS family. GmhA subfamily. Requires Zn(2+) as cofactor.

It is found in the cytoplasm. The catalysed reaction is 2 D-sedoheptulose 7-phosphate = D-glycero-alpha-D-manno-heptose 7-phosphate + D-glycero-beta-D-manno-heptose 7-phosphate. It functions in the pathway carbohydrate biosynthesis; D-glycero-D-manno-heptose 7-phosphate biosynthesis; D-glycero-alpha-D-manno-heptose 7-phosphate and D-glycero-beta-D-manno-heptose 7-phosphate from sedoheptulose 7-phosphate: step 1/1. Catalyzes the isomerization of sedoheptulose 7-phosphate in D-glycero-D-manno-heptose 7-phosphate. The polypeptide is Phosphoheptose isomerase (Thermodesulfovibrio yellowstonii (strain ATCC 51303 / DSM 11347 / YP87)).